Here is a 115-residue protein sequence, read N- to C-terminus: MKINTLQSLINQQITQVGHGGQAGRLTETNPLTENSHQISTAEKAFASEVLEHVKNTALSRHDIACLLPRVSNLELKQGKAGEVIVTGLRTEQLSLSDAKLLLEAAMRQDTAADG.

A disordered region spans residues 19 to 39 (HGGQAGRLTETNPLTENSHQI). Residues 27-39 (TETNPLTENSHQI) show a composition bias toward polar residues.

Functionally, belongs to an operon involved in the translocation of Yop proteins across the bacterial membranes or in the specific control of this function. This chain is Yop proteins translocation protein M (yscM), found in Yersinia enterocolitica.